The sequence spans 134 residues: Small ribosomal subunit protein bS6 (134 aa).

Residues Glu-99–Asn-134 form a disordered region. Residues Gln-105–Asn-134 show a composition bias toward basic and acidic residues.

Belongs to the bacterial ribosomal protein bS6 family.

In terms of biological role, binds together with bS18 to 16S ribosomal RNA. This is Small ribosomal subunit protein bS6 from Methylobacterium nodulans (strain LMG 21967 / CNCM I-2342 / ORS 2060).